The primary structure comprises 398 residues: Type III polyketide synthase pspB (398 aa).

Residues Lys-47 and 47–54 (KLLQINRS) each bind CoA. Cys-152 functions as the Nucleophile in the catalytic mechanism. 214 to 215 (SD) contributes to the substrate binding site. Residues Leu-267, Gly-321, 321–324 (GGEA), and Ala-324 contribute to the CoA site.

The protein belongs to the thiolase-like superfamily. Chalcone/stilbene synthases family. As to quaternary structure, homodimer.

It catalyses the reaction 11 malonyl-CoA + acetyl-CoA + S-adenosyl-L-methionine + 12 NADPH + 22 H(+) = soppiline B + S-adenosyl-L-homocysteine + 12 CO2 + 12 NADP(+) + 12 CoA + 8 H2O. The protein operates within secondary metabolite biosynthesis. Its function is as follows. Type III polyketide synthase; part of the gene cluster that mediates the biosynthesis of the alkylresorcinols called soppilines. The biosynthesis starts with the HR-PKS pspA-catalyzed carbon chain assembly through nine chain elongation cycles, using acetyl CoA and malonyl CoA as a starter and extender units, respectively, to produce the polyketide soppiline A. In the first round, the KR, DH, and CMeT domains work to produce 2-methyl-2-butenyl thioester. In rounds 2 to 5, the KR, DH, and ER domains fully catalyze the reduction of the elongated beta-ketothioester, resulting in the insertion of eight methylene units. The unusual Z,E,Z-triene motif is likely constructed during rounds 6 to 8. Typically, the DH domain introduces a double bond at an alpha,beta-position of an elongated polyketide chain, with the dehydration of a beta-hydroxy group. The last extension cycle would be carried out with L-oriented beta-ketoreduction by the KR domain to produce beta-hydroxy carboxylic acid soppiline A. The type III PKS pspB intercepts the elongated polyketide chain at round 8 from the HR-PKS pspA, followed by a tri-keto extension and decarboxylative aldol cyclization to produce 1,3,5-trisubstituted alkylresorcinol soppiline B. Subsequently, the cytochrome P450 monooxygenase pspC catalyzes three-step oxidations at the C-4 methyl group to carboxylic acid to yield soppiline C. This Penicillium soppii protein is Type III polyketide synthase pspB.